The sequence spans 197 residues: Holliday junction branch migration complex subunit RuvA (197 aa).

Residues 1–63 (MYDYIKGNLT…EDAHLLYGFH (63 aa)) are domain I. Positions 64-142 (TEDEKAVFLN…DINEVSTDKS (79 aa)) are domain II. A flexible linker region spans residues 143 to 147 (KVSTI). Residues 148-197 (NNNQELEEAVEALLALGYKTNELKKIEKFFEGTTDTAENYIKSALKMLMK) form a domain III region.

The protein belongs to the RuvA family. In terms of assembly, homotetramer. Forms an RuvA(8)-RuvB(12)-Holliday junction (HJ) complex. HJ DNA is sandwiched between 2 RuvA tetramers; dsDNA enters through RuvA and exits via RuvB. An RuvB hexamer assembles on each DNA strand where it exits the tetramer. Each RuvB hexamer is contacted by two RuvA subunits (via domain III) on 2 adjacent RuvB subunits; this complex drives branch migration. In the full resolvosome a probable DNA-RuvA(4)-RuvB(12)-RuvC(2) complex forms which resolves the HJ.

It localises to the cytoplasm. In terms of biological role, the RuvA-RuvB-RuvC complex processes Holliday junction (HJ) DNA during genetic recombination and DNA repair, while the RuvA-RuvB complex plays an important role in the rescue of blocked DNA replication forks via replication fork reversal (RFR). RuvA specifically binds to HJ cruciform DNA, conferring on it an open structure. The RuvB hexamer acts as an ATP-dependent pump, pulling dsDNA into and through the RuvAB complex. HJ branch migration allows RuvC to scan DNA until it finds its consensus sequence, where it cleaves and resolves the cruciform DNA. This is Holliday junction branch migration complex subunit RuvA from Streptococcus mutans serotype c (strain ATCC 700610 / UA159).